Here is a 132-residue protein sequence, read N- to C-terminus: Small ribosomal subunit protein uS8 (132 aa).

This sequence belongs to the universal ribosomal protein uS8 family. Part of the 30S ribosomal subunit. Contacts proteins S5 and S12.

Its function is as follows. One of the primary rRNA binding proteins, it binds directly to 16S rRNA central domain where it helps coordinate assembly of the platform of the 30S subunit. This chain is Small ribosomal subunit protein uS8, found in Corynebacterium glutamicum (strain R).